Consider the following 301-residue polypeptide: Acetyl-coenzyme A carboxylase carboxyl transferase subunit beta (301 aa).

Residues Leu25–Pro294 enclose the CoA carboxyltransferase N-terminal domain.

It belongs to the AccD/PCCB family. As to quaternary structure, acetyl-CoA carboxylase is a heterohexamer composed of biotin carboxyl carrier protein (AccB), biotin carboxylase (AccC) and two subunits each of ACCase subunit alpha (AccA) and ACCase subunit beta (AccD).

The protein resides in the cytoplasm. It carries out the reaction N(6)-carboxybiotinyl-L-lysyl-[protein] + acetyl-CoA = N(6)-biotinyl-L-lysyl-[protein] + malonyl-CoA. The protein operates within lipid metabolism; malonyl-CoA biosynthesis; malonyl-CoA from acetyl-CoA: step 1/1. In terms of biological role, component of the acetyl coenzyme A carboxylase (ACC) complex. Biotin carboxylase (BC) catalyzes the carboxylation of biotin on its carrier protein (BCCP) and then the CO(2) group is transferred by the transcarboxylase to acetyl-CoA to form malonyl-CoA. The sequence is that of Acetyl-coenzyme A carboxylase carboxyl transferase subunit beta from Brucella abortus (strain 2308).